The sequence spans 199 residues: Large ribosomal subunit protein mL51 (199 aa).

The transit peptide at 1 to 15 (MNSASISRLTSVIRT) directs the protein to the mitochondrion.

This sequence belongs to the mitochondrion-specific ribosomal protein mL51 family. As to quaternary structure, component of the mitochondrial ribosome large subunit (39S) which comprises a 16S rRNA and about 50 distinct proteins.

It localises to the mitochondrion. The polypeptide is Large ribosomal subunit protein mL51 (mrpl-51) (Caenorhabditis briggsae).